The primary structure comprises 294 residues: Ribosomal RNA small subunit methyltransferase A (294 aa).

Asn-31, Leu-33, Gly-58, Glu-79, Asp-104, and Asn-129 together coordinate S-adenosyl-L-methionine.

This sequence belongs to the class I-like SAM-binding methyltransferase superfamily. rRNA adenine N(6)-methyltransferase family. RsmA subfamily.

The protein localises to the cytoplasm. The catalysed reaction is adenosine(1518)/adenosine(1519) in 16S rRNA + 4 S-adenosyl-L-methionine = N(6)-dimethyladenosine(1518)/N(6)-dimethyladenosine(1519) in 16S rRNA + 4 S-adenosyl-L-homocysteine + 4 H(+). Functionally, specifically dimethylates two adjacent adenosines (A1518 and A1519) in the loop of a conserved hairpin near the 3'-end of 16S rRNA in the 30S particle. May play a critical role in biogenesis of 30S subunits. The chain is Ribosomal RNA small subunit methyltransferase A from Oceanobacillus iheyensis (strain DSM 14371 / CIP 107618 / JCM 11309 / KCTC 3954 / HTE831).